Here is a 66-residue protein sequence, read N- to C-terminus: Large ribosomal subunit protein bL35 (66 aa).

Composition is skewed to basic residues over residues 1–15 (MSKLKTRSSAAKRFK) and 22–43 (ILHKKAGKRHNLSKKSESRKRR). The tract at residues 1–43 (MSKLKTRSSAAKRFKVTATGKILHKKAGKRHNLSKKSESRKRR) is disordered.

This sequence belongs to the bacterial ribosomal protein bL35 family.

The protein is Large ribosomal subunit protein bL35 of Dictyoglomus turgidum (strain DSM 6724 / Z-1310).